The chain runs to 217 residues: Small ribosomal subunit protein uS3 (217 aa).

The KH type-2 domain maps to 38 to 106; it reads IRNFIKKELA…QVHINIIEIK (69 aa).

Belongs to the universal ribosomal protein uS3 family. As to quaternary structure, part of the 30S ribosomal subunit. Forms a tight complex with proteins S10 and S14.

In terms of biological role, binds the lower part of the 30S subunit head. Binds mRNA in the 70S ribosome, positioning it for translation. The protein is Small ribosomal subunit protein uS3 of Streptococcus suis (strain 98HAH33).